The following is a 161-amino-acid chain: Nucleotide-binding protein Tbd_1846 (161 aa).

This sequence belongs to the YajQ family.

Functionally, nucleotide-binding protein. The chain is Nucleotide-binding protein Tbd_1846 from Thiobacillus denitrificans (strain ATCC 25259 / T1).